The following is a 523-amino-acid chain: GMP synthase [glutamine-hydrolyzing] (523 aa).

Positions 8 to 205 (KILILDFGSQ…VVDICGCETN (198 aa)) constitute a Glutamine amidotransferase type-1 domain. Cys85 (nucleophile) is an active-site residue. Active-site residues include His179 and Glu181. The region spanning 206-398 (WTAENIIEDA…LGLPAEMLNR (193 aa)) is the GMPS ATP-PPase domain. 233-239 (SGGVDSS) lines the ATP pocket.

Homodimer.

The enzyme catalyses XMP + L-glutamine + ATP + H2O = GMP + L-glutamate + AMP + diphosphate + 2 H(+). The protein operates within purine metabolism; GMP biosynthesis; GMP from XMP (L-Gln route): step 1/1. In terms of biological role, catalyzes the synthesis of GMP from XMP. This chain is GMP synthase [glutamine-hydrolyzing], found in Histophilus somni (strain 129Pt) (Haemophilus somnus).